The following is a 541-amino-acid chain: CTP synthase (541 aa).

Residues 1–268 are amidoligase domain; the sequence is MAKFIFITGG…AEIVCRRLGL (268 aa). Position 13 (Ser-13) interacts with CTP. Ser-13 is a UTP binding site. ATP is bound by residues 14–19 and Asp-71; that span reads GLGKGI. Mg(2+)-binding residues include Asp-71 and Glu-141. CTP-binding positions include 148–150, 189–194, and Lys-225; these read DIE and KTKPTQ. UTP contacts are provided by residues 189 to 194 and Lys-225; that span reads KTKPTQ. In terms of domain architecture, Glutamine amidotransferase type-1 spans 293-539; that stretch reads EIALVGKYVA…IKAALEYRAG (247 aa). Residue Gly-359 participates in L-glutamine binding. The active-site Nucleophile; for glutamine hydrolysis is the Cys-386. L-glutamine-binding positions include 387–390, Glu-410, and Arg-467; that span reads MGMQ. Active-site residues include His-512 and Glu-514.

It belongs to the CTP synthase family. Homotetramer.

It carries out the reaction UTP + L-glutamine + ATP + H2O = CTP + L-glutamate + ADP + phosphate + 2 H(+). The catalysed reaction is L-glutamine + H2O = L-glutamate + NH4(+). The enzyme catalyses UTP + NH4(+) + ATP = CTP + ADP + phosphate + 2 H(+). It functions in the pathway pyrimidine metabolism; CTP biosynthesis via de novo pathway; CTP from UDP: step 2/2. Allosterically activated by GTP, when glutamine is the substrate; GTP has no effect on the reaction when ammonia is the substrate. The allosteric effector GTP functions by stabilizing the protein conformation that binds the tetrahedral intermediate(s) formed during glutamine hydrolysis. Inhibited by the product CTP, via allosteric rather than competitive inhibition. Functionally, catalyzes the ATP-dependent amination of UTP to CTP with either L-glutamine or ammonia as the source of nitrogen. Regulates intracellular CTP levels through interactions with the four ribonucleotide triphosphates. The sequence is that of CTP synthase from Symbiobacterium thermophilum (strain DSM 24528 / JCM 14929 / IAM 14863 / T).